The sequence spans 262 residues: Small ribosomal subunit protein eS1 (262 aa).

Belongs to the eukaryotic ribosomal protein eS1 family. Component of the small ribosomal subunit. Mature ribosomes consist of a small (40S) and a large (60S) subunit. The 40S subunit contains about 33 different proteins and 1 molecule of RNA (18S). The 60S subunit contains about 49 different proteins and 3 molecules of RNA (25S, 5.8S and 5S).

The protein localises to the cytoplasm. This is Small ribosomal subunit protein eS1 from Brassica campestris (Field mustard).